Here is a 920-residue protein sequence, read N- to C-terminus: Protein O-mannosyl-transferase TMTC3 (920 aa).

Residues 1 to 14 lie on the Cytoplasmic side of the membrane; sequence MLEGKMADINFKEV. Residues 15–35 form a helical membrane-spanning segment; sequence TLIVSVVAACYWNSLFCGFVF. Topologically, residues 36 to 94 are extracellular; that stretch reads DDVSAILDNKDLHPSTPLKTLFQNDFWGTPMSEERSHKSYRPLTVLTFRLNYLLSELKP. A helical transmembrane segment spans residues 95–115; it reads MSYHLLNTVFHAVVSVIFLKV. Residues 116–125 lie on the Cytoplasmic side of the membrane; it reads CRLFLDKRSS. Transmembrane regions (helical) follow at residues 126–144 and 145–163; these read MIAALLFAVHPIHTEAVTG and VVGRAELLSSVFFLAAFLS. At 164 to 171 the chain is on the cytoplasmic side; it reads YTKSKGPD. The helical transmembrane segment at 172–192 threads the bilayer; that stretch reads NSIVWTPIVLTVFLVAVATLC. Topologically, residues 193–198 are extracellular; the sequence is KEQGIT. A helical membrane pass occupies residues 199-219; it reads VVGICCVYEVFVAQGYTLPML. Residues 220–236 are Cytoplasmic-facing; the sequence is CTVAGQFLRGKGSIPLS. Residues 237–257 form a helical membrane-spanning segment; that stretch reads MLQTLVKLIVLMLSTLLLVVV. Residues 258 to 325 are Extracellular-facing; that stretch reads RVQVIQSQLP…LIESFLDVRN (68 aa). Residues 326-346 traverse the membrane as a helical segment; it reads LATFAFFCFLGALGIFSLRYP. At 347-358 the chain is on the cytoplasmic side; that stretch reads GDSSKTVLMALC. A helical transmembrane segment spans residues 359–379; it reads LMALPFIPASNLFFPVGFVVA. Over 380–381 the chain is Extracellular; sequence ER. The helical transmembrane segment at 382-402 threads the bilayer; it reads VLYVPSMGFCILVAHGWQKIS. Residues 403–409 are Cytoplasmic-facing; it reads NKSVLKK. The chain crosses the membrane as a helical span at residues 410 to 428; sequence LSWVCLSMVILTHALKTLH. The Extracellular portion of the chain corresponds to 429–920; sequence RNWDWESEYT…EEIERILNGE (492 aa). TPR repeat units lie at residues 451–484, 485–518, 534–567, 568–601, 602–635, 673–706, 707–740, 742–775, and 776–809; these read AKLWNNVGHALENEKNFEKALKYFLQATHVQPDD, IGAHMNVGRTYKNLNRSREAEASYMLAKSLMPQI, NVYINLANLIRANESRLEEADQLYRQAISMRPDF, KQAYISRGELLLKMNKPLKAKEAYLKALELDRNN, ADLWYNLAIVYIELKEPNEALKNFNRALELNPKH, ANGYFNLGMLAMDDKKDSEAESWMKKAIKLQPDF, RSALFNLALLYSQTAKELKALPILEELLKYYPDH, KGLILKGDILMNQKKDIPGAKKCFEKILEMDPSN, and VQGKHNLCVVYFEEKELLKAERCLVETLALAPHE. Asn499 carries N-linked (GlcNAc...) asparagine glycosylation. Position 508 is a phosphotyrosine (Tyr508). A glycan (N-linked (GlcNAc...) asparagine) is linked at Asn546. The tract at residues 829–897 is disordered; the sequence is VEQPLAPADK…APHKTTKDIK (69 aa). A compositionally biased stretch (basic and acidic residues) spans 840 to 858; sequence PGTEEREEIPSEDVKEISS. Positions 867-880 are enriched in low complexity; sequence KTNNNRNSKSNKQS. Residues 887–897 show a composition bias toward basic and acidic residues; that stretch reads DAPHKTTKDIK.

Belongs to the TMTC family.

Its subcellular location is the membrane. It is found in the endoplasmic reticulum. It catalyses the reaction a di-trans,poly-cis-dolichyl beta-D-mannosyl phosphate + L-seryl-[protein] = 3-O-(alpha-D-mannosyl)-L-seryl-[protein] + a di-trans,poly-cis-dolichyl phosphate + H(+). It carries out the reaction a di-trans,poly-cis-dolichyl beta-D-mannosyl phosphate + L-threonyl-[protein] = 3-O-(alpha-D-mannosyl)-L-threonyl-[protein] + a di-trans,poly-cis-dolichyl phosphate + H(+). It functions in the pathway protein modification; protein glycosylation. In terms of biological role, transfers mannosyl residues to the hydroxyl group of serine or threonine residues. The 4 members of the TMTC family are O-mannosyl-transferases dedicated primarily to the cadherin superfamily, each member seems to have a distinct role in decorating the cadherin domains with O-linked mannose glycans at specific regions. Also acts as O-mannosyl-transferase on other proteins such as PDIA3. Involved in the positive regulation of proteasomal protein degradation in the endoplasmic reticulum (ER), and the control of ER stress response. This is Protein O-mannosyl-transferase TMTC3 from Mus musculus (Mouse).